The primary structure comprises 340 residues: Ketol-acid reductoisomerase (NADP(+)) (340 aa).

The KARI N-terminal Rossmann domain occupies 3–182; the sequence is VQMEYEKDVK…GAARVGLLET (180 aa). Residues 26–29, arginine 49, serine 53, and 83–86 contribute to the NADP(+) site; these read YGSQ and DEIQ. The active site involves histidine 108. Residue glycine 134 coordinates NADP(+). The KARI C-terminal knotted domain maps to 183-328; sequence TYKEETEEDL…AELRKAMPFV (146 aa). Aspartate 191, glutamate 195, glutamate 227, and glutamate 231 together coordinate Mg(2+). Serine 252 is a substrate binding site.

Belongs to the ketol-acid reductoisomerase family. The cofactor is Mg(2+).

It catalyses the reaction (2R)-2,3-dihydroxy-3-methylbutanoate + NADP(+) = (2S)-2-acetolactate + NADPH + H(+). The catalysed reaction is (2R,3R)-2,3-dihydroxy-3-methylpentanoate + NADP(+) = (S)-2-ethyl-2-hydroxy-3-oxobutanoate + NADPH + H(+). Its pathway is amino-acid biosynthesis; L-isoleucine biosynthesis; L-isoleucine from 2-oxobutanoate: step 2/4. The protein operates within amino-acid biosynthesis; L-valine biosynthesis; L-valine from pyruvate: step 2/4. Its function is as follows. Involved in the biosynthesis of branched-chain amino acids (BCAA). Catalyzes an alkyl-migration followed by a ketol-acid reduction of (S)-2-acetolactate (S2AL) to yield (R)-2,3-dihydroxy-isovalerate. In the isomerase reaction, S2AL is rearranged via a Mg-dependent methyl migration to produce 3-hydroxy-3-methyl-2-ketobutyrate (HMKB). In the reductase reaction, this 2-ketoacid undergoes a metal-dependent reduction by NADPH to yield (R)-2,3-dihydroxy-isovalerate. The polypeptide is Ketol-acid reductoisomerase (NADP(+)) (Streptococcus pneumoniae (strain Hungary19A-6)).